Reading from the N-terminus, the 368-residue chain is Spermidine/putrescine import ATP-binding protein PotA (368 aa).

Positions 6–236 constitute an ABC transporter domain; sequence VSIKNVSKFF…PVNVFAATFI (231 aa). 38 to 45 is a binding site for ATP; sequence GPSGCGKT.

It belongs to the ABC transporter superfamily. Spermidine/putrescine importer (TC 3.A.1.11.1) family. The complex is composed of two ATP-binding proteins (PotA), two transmembrane proteins (PotB and PotC) and a solute-binding protein (PotD).

The protein resides in the cell inner membrane. It catalyses the reaction ATP + H2O + polyamine-[polyamine-binding protein]Side 1 = ADP + phosphate + polyamineSide 2 + [polyamine-binding protein]Side 1.. Its function is as follows. Part of the ABC transporter complex PotABCD involved in spermidine/putrescine import. Responsible for energy coupling to the transport system. This chain is Spermidine/putrescine import ATP-binding protein PotA, found in Thermotoga maritima (strain ATCC 43589 / DSM 3109 / JCM 10099 / NBRC 100826 / MSB8).